The primary structure comprises 142 residues: Large ribosomal subunit protein uL16 (142 aa).

The protein belongs to the universal ribosomal protein uL16 family. Part of the 50S ribosomal subunit.

Binds 23S rRNA and is also seen to make contacts with the A and possibly P site tRNAs. This Thermotoga maritima (strain ATCC 43589 / DSM 3109 / JCM 10099 / NBRC 100826 / MSB8) protein is Large ribosomal subunit protein uL16.